A 276-amino-acid chain; its full sequence is Cell wall synthesis protein KRE9 (276 aa).

An N-terminal signal peptide occupies residues 1 to 21; sequence MRLQRNSIICALVFLVSFVLG.

Belongs to the KRE9/KNH1 family. Post-translationally, O-glycosylated.

It localises to the secreted. Its subcellular location is the cell wall. In terms of biological role, involved in cell wall beta(1-&gt;6) glucan synthesis. This is Cell wall synthesis protein KRE9 from Saccharomyces cerevisiae (strain ATCC 204508 / S288c) (Baker's yeast).